A 60-amino-acid polypeptide reads, in one-letter code: Large ribosomal subunit protein bL32 (60 aa).

It belongs to the bacterial ribosomal protein bL32 family.

This is Large ribosomal subunit protein bL32 from Streptococcus pneumoniae serotype 19F (strain G54).